Reading from the N-terminus, the 346-residue chain is Biotin synthase (346 aa).

In terms of domain architecture, Radical SAM core spans 38 to 256 (RQVQVSTLLS…IAVARIMMPT (219 aa)). Residues C53, C57, and C60 each contribute to the [4Fe-4S] cluster site. Residues C97, C128, C188, and R260 each contribute to the [2Fe-2S] cluster site.

The protein belongs to the radical SAM superfamily. Biotin synthase family. As to quaternary structure, homodimer. It depends on [4Fe-4S] cluster as a cofactor. Requires [2Fe-2S] cluster as cofactor.

It catalyses the reaction (4R,5S)-dethiobiotin + (sulfur carrier)-SH + 2 reduced [2Fe-2S]-[ferredoxin] + 2 S-adenosyl-L-methionine = (sulfur carrier)-H + biotin + 2 5'-deoxyadenosine + 2 L-methionine + 2 oxidized [2Fe-2S]-[ferredoxin]. It participates in cofactor biosynthesis; biotin biosynthesis; biotin from 7,8-diaminononanoate: step 2/2. In terms of biological role, catalyzes the conversion of dethiobiotin (DTB) to biotin by the insertion of a sulfur atom into dethiobiotin via a radical-based mechanism. The sequence is that of Biotin synthase from Escherichia coli (strain SE11).